The primary structure comprises 314 residues: Putative steroid dehydrogenase 1 (314 aa).

An NADP(+)-binding site is contributed by 47 to 76 (ASWAVVTGATDGIGKSYSFELAKRGFNVYI). Residue Tyr202 is part of the active site.

Belongs to the short-chain dehydrogenases/reductases (SDR) family. 17-beta-HSD 3 subfamily.

The protein is Putative steroid dehydrogenase 1 (stdh-1) of Caenorhabditis elegans.